Reading from the N-terminus, the 250-residue chain is 2,3-bisphosphoglycerate-dependent phosphoglycerate mutase (250 aa).

Substrate contacts are provided by residues 8–15 (RHGESQWN), 21–22 (TG), R60, 87–90 (ERHY), K98, 114–115 (RR), and 183–184 (GN). Residue H9 is the Tele-phosphohistidine intermediate of the active site. E87 (proton donor/acceptor) is an active-site residue.

This sequence belongs to the phosphoglycerate mutase family. BPG-dependent PGAM subfamily. As to quaternary structure, homodimer.

It carries out the reaction (2R)-2-phosphoglycerate = (2R)-3-phosphoglycerate. It participates in carbohydrate degradation; glycolysis; pyruvate from D-glyceraldehyde 3-phosphate: step 3/5. In terms of biological role, catalyzes the interconversion of 2-phosphoglycerate and 3-phosphoglycerate. In Bordetella petrii (strain ATCC BAA-461 / DSM 12804 / CCUG 43448), this protein is 2,3-bisphosphoglycerate-dependent phosphoglycerate mutase.